The chain runs to 53 residues: Sec-independent protein translocase protein TatA (53 aa).

Residues 1–21 (MGMSLSHLLIVLLIIFVLFGA) traverse the membrane as a helical segment.

The protein belongs to the TatA/E family. As to quaternary structure, the Tat system comprises two distinct complexes: a TatABC complex, containing multiple copies of TatA, TatB and TatC subunits, and a separate TatA complex, containing only TatA subunits. Substrates initially bind to the TatABC complex, which probably triggers association of the separate TatA complex to form the active translocon.

The protein localises to the cell inner membrane. Part of the twin-arginine translocation (Tat) system that transports large folded proteins containing a characteristic twin-arginine motif in their signal peptide across membranes. TatA could form the protein-conducting channel of the Tat system. The sequence is that of Sec-independent protein translocase protein TatA from Rickettsia conorii (strain ATCC VR-613 / Malish 7).